Here is a 96-residue protein sequence, read N- to C-terminus: Protein Vpr (96 aa).

Residues 1–42 are homooligomerization; sequence MEQAPEDQGPQREPYNEWALELLEELKNEAVRHFPRLWLHGL. A phosphoserine; by host mark is found at serine 79 and serine 96.

It belongs to the HIV-1 VPR protein family. As to quaternary structure, homooligomer, may form homodimer. Interacts with p6-gag region of the Pr55 Gag precursor protein through a (Leu-X-X)4 motif near the C-terminus of the P6gag protein. Interacts with host UNG. May interact with host RAD23A/HHR23A. Interacts with host VPRBP/DCAF1, leading to hijack the CUL4A-RBX1-DDB1-DCAF1/VPRBP complex, mediating ubiquitination of host proteins such as TERT and ZGPAT and arrest of the cell cycle in G2 phase. Post-translationally, phosphorylated on several residues by host. These phosphorylations regulate VPR activity for the nuclear import of the HIV-1 pre-integration complex.

The protein localises to the virion. It localises to the host nucleus. Its subcellular location is the host extracellular space. Functionally, during virus replication, may deplete host UNG protein, and incude G2-M cell cycle arrest. Acts by targeting specific host proteins for degradation by the 26S proteasome, through association with the cellular CUL4A-DDB1 E3 ligase complex by direct interaction with host VPRPB/DCAF-1. Cell cycle arrest reportedly occurs within hours of infection and is not blocked by antiviral agents, suggesting that it is initiated by the VPR carried into the virion. Additionally, VPR induces apoptosis in a cell cycle dependent manner suggesting that these two effects are mechanistically linked. Detected in the serum and cerebrospinal fluid of AIDS patient, VPR may also induce cell death to bystander cells. In terms of biological role, during virus entry, plays a role in the transport of the viral pre-integration (PIC) complex to the host nucleus. This function is crucial for viral infection of non-dividing macrophages. May act directly at the nuclear pore complex, by binding nucleoporins phenylalanine-glycine (FG)-repeat regions. The chain is Protein Vpr from Human immunodeficiency virus type 1 group M subtype G (isolate SE6165) (HIV-1).